The primary structure comprises 610 residues: Ectonucleoside triphosphate diphosphohydrolase 7 (610 aa).

The Cytoplasmic segment spans residues 1 to 28 (MARISFSCLFPASWHCSLPSVTQFSRQR). A helical transmembrane segment spans residues 29–49 (VALLIISVAVFILVFAAVADL). Topologically, residues 50–555 (QLWSSRAFRD…VSWFRISFVY (506 aa)) are vesicular. The active-site Proton acceptor is Glu217. N-linked (GlcNAc...) asparagine glycans are attached at residues Asn336 and Asn400. Cys454 and Cys483 are oxidised to a cystine. Residues 556–576 (NHYLFFACILVVLLSIVLYIL) traverse the membrane as a helical segment. At 577–610 (RLRRIHRRQARASALDLLLMEEGVHTVLEPGIPT) the chain is on the cytoplasmic side.

The protein belongs to the GDA1/CD39 NTPase family. Ca(2+) is required as a cofactor. Requires Mg(2+) as cofactor.

Its subcellular location is the cytoplasmic vesicle membrane. It catalyses the reaction a ribonucleoside 5'-triphosphate + H2O = a ribonucleoside 5'-diphosphate + phosphate + H(+). It carries out the reaction UTP + H2O = UDP + phosphate + H(+). The catalysed reaction is GTP + H2O = GDP + phosphate + H(+). The enzyme catalyses CTP + H2O = CDP + phosphate + H(+). In terms of biological role, catalyzes the hydrolysis of nucleoside triphosphates and diphosphates in a calcium- or magnesium-dependent manner. Preferentially hydrolyzes nucleoside 5'-triphosphates, with substrate preference for UTP &gt; GTP &gt; CTP. Hydrolyzes ATP and nucleoside diphosphates only to a minor extent. This Xenopus tropicalis (Western clawed frog) protein is Ectonucleoside triphosphate diphosphohydrolase 7 (entpd7).